The primary structure comprises 666 residues: Endogenous retrovirus group K member 10 Gag polyprotein (666 aa).

A lipid anchor (N-myristoyl glycine) is attached at glycine 2. The interval 164–183 is disordered; that stretch reads EGKGPELMGPSESKPRGTSP. CCHC-type zinc fingers lie at residues 544-561 and 580-597; these read GKCY…NCPV and DLCP…QCRS. The segment at 598–642 is disordered; it reads KFDKNGQPLSGNEQRGQPQAPQQTGAFPIQPFVPQGFQGQQPPLS. Over residues 604-622 the composition is skewed to polar residues; the sequence is QPLSGNEQRGQPQAPQQTG. The segment covering 624-640 has biased composition (low complexity); sequence FPIQPFVPQGFQGQQPP.

It belongs to the beta type-B retroviral Gag protein family. HERV class-II K(HML-2) gag subfamily. In terms of processing, myristoylation is essential for retroviral assembly. Alteration of the glycine residue leads to a block in the budding of particles and an accumulation of Gag inside the cell. Post-translationally, specific enzymatic cleavages may yield mature proteins.

Its subcellular location is the cell membrane. The products of the Gag polyproteins of infectious retroviruses perform highly complex orchestrated tasks during the assembly, budding, maturation, and infection stages of the viral replication cycle. During viral assembly, the proteins form membrane associations and self-associations that ultimately result in budding of an immature virion from the infected cell. Gag precursors also function during viral assembly to selectively bind and package two plus strands of genomic RNA. Endogenous Gag proteins may have kept, lost or modified their original function during evolution. In Homo sapiens (Human), this protein is Endogenous retrovirus group K member 10 Gag polyprotein (ERVK-10).